The following is a 197-amino-acid chain: Probable UbiX-like flavin prenyltransferase (197 aa).

FMN contacts are provided by residues 9-11 (GAT), Ser-36, 87-90 (SMKT), and Arg-122.

It belongs to the UbiX/PAD1 family. YclB subfamily. Homododecamer.

It catalyses the reaction dimethylallyl phosphate + FMNH2 = prenylated FMNH2 + phosphate. Involved in the non-oxidative decarboxylation and detoxification of phenolic derivatives under both aerobic and anaerobic conditions. Flavin prenyltransferase that catalyzes the synthesis of the prenylated FMN cofactor (prenyl-FMN) for phenolic acid decarboxylase. This chain is Probable UbiX-like flavin prenyltransferase, found in Escherichia coli O157:H7.